Here is a 239-residue protein sequence, read N- to C-terminus: MTIKAISVDIDGTITYPDRRLHEKALEAIRLAESLGVPVMLVTGNTVQFGEAAAILIGTSGPVVGEDGGALSIKEGKLRKRVYLTNMDEEWILWGELKKRYPEALLSFSMPERKAGLVVLRTVPVKAVRELIKELGLNLIAVDSGFAIHIKKPWINKGTGIEKACEYLGISPKEVAHIGDGENDLDAFGVVGYRVAVAQAPESLKEKADYVTTKPYGEGGAEAIEHILRKFGYLPEEKT.

Asp9 acts as the Nucleophile in catalysis. 2 residues coordinate Mg(2+): Asp9 and Asp11. Lys157 lines the substrate pocket. Residues Asp180 and Asp184 each coordinate Mg(2+).

It belongs to the archaeal SPP-like hydrolase family. It depends on Mg(2+) as a cofactor.

It carries out the reaction 2-phosphoglycolate + H2O = glycolate + phosphate. Catalyzes the dephosphorylation of 2-phosphoglycolate. This is Phosphoglycolate phosphatase from Thermococcus kodakarensis (strain ATCC BAA-918 / JCM 12380 / KOD1) (Pyrococcus kodakaraensis (strain KOD1)).